The following is a 466-amino-acid chain: Sucrose-6-phosphate hydrolase (466 aa).

Substrate contacts are provided by residues 38-41 (LLND), Gln-57, 100-101 (YS), 159-160 (RD), and Glu-218. The active site involves Asp-41.

The protein resides in the cytoplasm. The enzyme catalyses Hydrolysis of terminal non-reducing beta-D-fructofuranoside residues in beta-D-fructofuranosides.. The protein operates within glycan biosynthesis; sucrose metabolism. In terms of biological role, hydrolyzes sucrose and sucrose-6P, but fails to hydrolyze any of the phosphorylated isomers of sucrose and other phospho-D-glucosides, including maltose-6'P and trehalose-6P. The polypeptide is Sucrose-6-phosphate hydrolase (scrB) (Klebsiella pneumoniae).